Reading from the N-terminus, the 211-residue chain is Ribonuclease P protein component 3 (211 aa).

Belongs to the eukaryotic/archaeal RNase P protein component 3 family. Consists of a catalytic RNA component and at least 4-5 protein subunits.

It localises to the cytoplasm. It catalyses the reaction Endonucleolytic cleavage of RNA, removing 5'-extranucleotides from tRNA precursor.. In terms of biological role, part of ribonuclease P, a protein complex that generates mature tRNA molecules by cleaving their 5'-ends. In Aeropyrum pernix (strain ATCC 700893 / DSM 11879 / JCM 9820 / NBRC 100138 / K1), this protein is Ribonuclease P protein component 3.